The sequence spans 73 residues: Heterin-2 (73 aa).

Residues 1 to 22 form the signal peptide; that stretch reads MQYKTFLVIFLAYLLVTEEALA. The propeptide occupies 47 to 73; that stretch reads KRALKNIFDPYQKNLDLELERLLSQLQ.

It belongs to the non-disulfide-bridged peptide (NDBP) superfamily. Medium-length antimicrobial peptide (group 3) family. In terms of tissue distribution, expressed by the venom gland.

The protein resides in the secreted. It localises to the target cell membrane. Its function is as follows. Amphipathic peptide with potent activities against Gram-positive bacteria (MIC=5.6-30.0 uM) and weaker activities against the tested Gram-negative bacteria (MIC=15 uM to &gt;45 uM). It has high hemolytic activity against human erythrocytes. May act by disrupting the integrity of the bacterial cell membrane. The chain is Heterin-2 from Heterometrus spinifer (Asia giant forest scorpion).